Here is a 153-residue protein sequence, read N- to C-terminus: uncharacterized protein (153 aa).

It is found in the mitochondrion. This is an uncharacterized protein from Arabidopsis thaliana (Mouse-ear cress).